Reading from the N-terminus, the 122-residue chain is LYR motif-containing protein 1 (122 aa).

It belongs to the complex I LYR family.

In Xenopus laevis (African clawed frog), this protein is LYR motif-containing protein 1 (lyrm1).